The following is a 732-amino-acid chain: Copper-transporting ATPase (732 aa).

Residues 1–88 lie on the Cytoplasmic side of the membrane; it reads MTKAQFYIEG…NPSFLTPNVK (88 aa). Positions 2–68 constitute an HMA domain; it reads TKAQFYIEGM…QIEKLGYQPR (67 aa). Cu(+) is bound by residues C13 and C16. A helical membrane pass occupies residues 89 to 109; the sequence is LALVLLGTLGVLALSMFAPLL. Over 110-122 the chain is Extracellular; it reads PLPSFLKNPFING. Residues 123–142 traverse the membrane as a helical segment; it reads IVQLVLSLMVMHMGRNFYVH. Over 143–149 the chain is Cytoplasmic; that stretch reads GFKALWA. The chain crosses the membrane as a helical span at residues 150-170; sequence RQPNMDSLIALGTSAALLYSL. At 171–187 the chain is on the extracellular side; it reads VLLFRAYTHAPIEGYYF. Residues 188 to 208 traverse the membrane as a helical segment; the sequence is ESVCVILLFVMAGKRVEENSK. Topologically, residues 209–336 are cytoplasmic; the sequence is DKALEAMQSL…KAPIARLADK (128 aa). A helical transmembrane segment spans residues 337 to 359; it reads VAGVFVPIVIGIASIAFLVWLVL. At 360–365 the chain is on the extracellular side; the sequence is GDFTRA. The chain crosses the membrane as a helical span at residues 366–383; the sequence is LEVFIAILVISCPCALGL. Topologically, residues 384 to 663 are cytoplasmic; that stretch reads ATPMALLVAQ…KLSALTIANI (280 aa). D421 functions as the 4-aspartylphosphate intermediate in the catalytic mechanism. Mg(2+) contacts are provided by D609 and D613. The chain crosses the membrane as a helical span at residues 664–683; that stretch reads KQNLFWAFCYNSIAIPLACG. The Extracellular portion of the chain corresponds to 684-694; the sequence is VAYKLGIMFNP. The helical transmembrane segment at 695-713 threads the bilayer; sequence MLASLAMSLSSVSVVLNAQ. At 714–732 the chain is on the cytoplasmic side; sequence RLRGAHFKIRGSHENRHSS.

It belongs to the cation transport ATPase (P-type) (TC 3.A.3) family. Type IB subfamily.

It localises to the cell membrane. It catalyses the reaction Cu(+)(in) + ATP + H2O = Cu(+)(out) + ADP + phosphate + H(+). Its function is as follows. Probably involved in copper export. In Helicobacter felis (strain ATCC 49179 / CCUG 28539 / NCTC 12436 / CS1), this protein is Copper-transporting ATPase (copA).